The sequence spans 484 residues: tRNA sulfurtransferase (484 aa).

The THUMP domain maps to 63-167 (EAFAERLACI…KESLYLVSKR (105 aa)). ATP-binding positions include 185–186 (LI), Lys-267, Gly-289, and Gln-298. Cys-346 and Cys-458 are oxidised to a cystine. In terms of domain architecture, Rhodanese spans 406-484 (INSGEVIIDV…GYDNVKVYRP (79 aa)). The Cysteine persulfide intermediate role is filled by Cys-458.

This sequence belongs to the ThiI family.

It is found in the cytoplasm. The catalysed reaction is [ThiI sulfur-carrier protein]-S-sulfanyl-L-cysteine + a uridine in tRNA + 2 reduced [2Fe-2S]-[ferredoxin] + ATP + H(+) = [ThiI sulfur-carrier protein]-L-cysteine + a 4-thiouridine in tRNA + 2 oxidized [2Fe-2S]-[ferredoxin] + AMP + diphosphate. It carries out the reaction [ThiS sulfur-carrier protein]-C-terminal Gly-Gly-AMP + S-sulfanyl-L-cysteinyl-[cysteine desulfurase] + AH2 = [ThiS sulfur-carrier protein]-C-terminal-Gly-aminoethanethioate + L-cysteinyl-[cysteine desulfurase] + A + AMP + 2 H(+). The protein operates within cofactor biosynthesis; thiamine diphosphate biosynthesis. In terms of biological role, catalyzes the ATP-dependent transfer of a sulfur to tRNA to produce 4-thiouridine in position 8 of tRNAs, which functions as a near-UV photosensor. Also catalyzes the transfer of sulfur to the sulfur carrier protein ThiS, forming ThiS-thiocarboxylate. This is a step in the synthesis of thiazole, in the thiamine biosynthesis pathway. The sulfur is donated as persulfide by IscS. In Shewanella woodyi (strain ATCC 51908 / MS32), this protein is tRNA sulfurtransferase.